The chain runs to 257 residues: uncharacterized protein (257 aa).

A signal peptide spans 1-22 (MGYLKRFALYISVMILMFAIAG). Residue C23 is the site of N-palmitoyl cysteine attachment. Residue C23 is the site of S-diacylglycerol cysteine attachment.

The protein belongs to the staphylococcal tandem lipoprotein family.

Its subcellular location is the cell membrane. This is an uncharacterized protein from Staphylococcus aureus (strain MRSA252).